The chain runs to 335 residues: Holliday junction branch migration complex subunit RuvB (335 aa).

The interval 1 to 181 is large ATPase domain (RuvB-L); the sequence is MERIVEVEKF…FGMHFRLQFY (181 aa). Residues Leu20, Arg21, Gly62, Lys65, Thr66, Thr67, 128-130, Arg171, Tyr181, and Arg218 contribute to the ATP site; that span reads EDF. Mg(2+) is bound at residue Thr66. The segment at 182–252 is small ATPAse domain (RuvB-S); sequence TPQELAQIIT…RTQKALEALG (71 aa). The interval 255–335 is head domain (RuvB-H); the sequence is ERGFDELDLK…LTPNIQNSLF (81 aa). DNA-binding residues include Arg309 and Arg314.

Belongs to the RuvB family. As to quaternary structure, homohexamer. Forms an RuvA(8)-RuvB(12)-Holliday junction (HJ) complex. HJ DNA is sandwiched between 2 RuvA tetramers; dsDNA enters through RuvA and exits via RuvB. An RuvB hexamer assembles on each DNA strand where it exits the tetramer. Each RuvB hexamer is contacted by two RuvA subunits (via domain III) on 2 adjacent RuvB subunits; this complex drives branch migration. In the full resolvosome a probable DNA-RuvA(4)-RuvB(12)-RuvC(2) complex forms which resolves the HJ.

It is found in the cytoplasm. It catalyses the reaction ATP + H2O = ADP + phosphate + H(+). Its function is as follows. The RuvA-RuvB-RuvC complex processes Holliday junction (HJ) DNA during genetic recombination and DNA repair, while the RuvA-RuvB complex plays an important role in the rescue of blocked DNA replication forks via replication fork reversal (RFR). RuvA specifically binds to HJ cruciform DNA, conferring on it an open structure. The RuvB hexamer acts as an ATP-dependent pump, pulling dsDNA into and through the RuvAB complex. RuvB forms 2 homohexamers on either side of HJ DNA bound by 1 or 2 RuvA tetramers; 4 subunits per hexamer contact DNA at a time. Coordinated motions by a converter formed by DNA-disengaged RuvB subunits stimulates ATP hydrolysis and nucleotide exchange. Immobilization of the converter enables RuvB to convert the ATP-contained energy into a lever motion, pulling 2 nucleotides of DNA out of the RuvA tetramer per ATP hydrolyzed, thus driving DNA branch migration. The RuvB motors rotate together with the DNA substrate, which together with the progressing nucleotide cycle form the mechanistic basis for DNA recombination by continuous HJ branch migration. Branch migration allows RuvC to scan DNA until it finds its consensus sequence, where it cleaves and resolves cruciform DNA. In Nitratiruptor sp. (strain SB155-2), this protein is Holliday junction branch migration complex subunit RuvB.